The following is a 92-amino-acid chain: Small ribosomal subunit protein bS20 (92 aa).

Positions 1 to 23 (MANTPSAKKRAKQAEKRRSHNAS) are disordered. Basic residues predominate over residues 7 to 20 (AKKRAKQAEKRRSH).

This sequence belongs to the bacterial ribosomal protein bS20 family.

Its function is as follows. Binds directly to 16S ribosomal RNA. This is Small ribosomal subunit protein bS20 from Pseudomonas savastanoi pv. phaseolicola (strain 1448A / Race 6) (Pseudomonas syringae pv. phaseolicola (strain 1448A / Race 6)).